Here is a 212-residue protein sequence, read N- to C-terminus: 3,4-dihydroxy-2-butanone 4-phosphate synthase (212 aa).

Residues 37-38, Asp-42, 150-154, and Glu-174 contribute to the D-ribulose 5-phosphate site; these read RE and RRGHT. Glu-38 lines the Mg(2+) pocket. His-153 contacts Mg(2+).

The protein belongs to the DHBP synthase family. Homodimer. Requires Mg(2+) as cofactor. Mn(2+) serves as cofactor.

It catalyses the reaction D-ribulose 5-phosphate = (2S)-2-hydroxy-3-oxobutyl phosphate + formate + H(+). It participates in cofactor biosynthesis; riboflavin biosynthesis; 2-hydroxy-3-oxobutyl phosphate from D-ribulose 5-phosphate: step 1/1. Its function is as follows. Catalyzes the conversion of D-ribulose 5-phosphate to formate and 3,4-dihydroxy-2-butanone 4-phosphate. The polypeptide is 3,4-dihydroxy-2-butanone 4-phosphate synthase (Shewanella piezotolerans (strain WP3 / JCM 13877)).